A 442-amino-acid chain; its full sequence is tRNA modification GTPase MnmE (442 aa).

Positions 23, 82, and 121 each coordinate (6S)-5-formyl-5,6,7,8-tetrahydrofolate. Positions 215–364 constitute a TrmE-type G domain; it reads GTSLILAGKP…VKQALIQWMQ (150 aa). Asn-225 provides a ligand contact to K(+). Residues 225-230, 244-250, 269-272, and 325-328 contribute to the GTP site; these read NVGKSS, THIPGTT, DTAG, and NKAD. Mg(2+) is bound at residue Ser-229. The K(+) site is built by Thr-244, Ile-246, and Thr-249. Mg(2+) is bound at residue Thr-250. Position 442 (Lys-442) interacts with (6S)-5-formyl-5,6,7,8-tetrahydrofolate.

The protein belongs to the TRAFAC class TrmE-Era-EngA-EngB-Septin-like GTPase superfamily. TrmE GTPase family. As to quaternary structure, homodimer. Heterotetramer of two MnmE and two MnmG subunits. Requires K(+) as cofactor.

Its subcellular location is the cytoplasm. Its function is as follows. Exhibits a very high intrinsic GTPase hydrolysis rate. Involved in the addition of a carboxymethylaminomethyl (cmnm) group at the wobble position (U34) of certain tRNAs, forming tRNA-cmnm(5)s(2)U34. The sequence is that of tRNA modification GTPase MnmE from Chlamydia pneumoniae (Chlamydophila pneumoniae).